Reading from the N-terminus, the 341-residue chain is UDP-3-O-acylglucosamine N-acyltransferase (341 aa).

Histidine 241 functions as the Proton acceptor in the catalytic mechanism.

This sequence belongs to the transferase hexapeptide repeat family. LpxD subfamily. Homotrimer.

It carries out the reaction a UDP-3-O-[(3R)-3-hydroxyacyl]-alpha-D-glucosamine + a (3R)-hydroxyacyl-[ACP] = a UDP-2-N,3-O-bis[(3R)-3-hydroxyacyl]-alpha-D-glucosamine + holo-[ACP] + H(+). Its pathway is bacterial outer membrane biogenesis; LPS lipid A biosynthesis. Its function is as follows. Catalyzes the N-acylation of UDP-3-O-acylglucosamine using 3-hydroxyacyl-ACP as the acyl donor. Is involved in the biosynthesis of lipid A, a phosphorylated glycolipid that anchors the lipopolysaccharide to the outer membrane of the cell. The chain is UDP-3-O-acylglucosamine N-acyltransferase from Histophilus somni (strain 129Pt) (Haemophilus somnus).